We begin with the raw amino-acid sequence, 122 residues long: Large ribosomal subunit protein uL14 (122 aa).

It belongs to the universal ribosomal protein uL14 family. In terms of assembly, part of the 50S ribosomal subunit. Forms a cluster with proteins L3 and L19. In the 70S ribosome, L14 and L19 interact and together make contacts with the 16S rRNA in bridges B5 and B8.

Functionally, binds to 23S rRNA. Forms part of two intersubunit bridges in the 70S ribosome. The polypeptide is Large ribosomal subunit protein uL14 (Bacillus subtilis (strain 168)).